The following is a 447-amino-acid chain: uncharacterized protein (447 aa).

[4Fe-4S] cluster contacts are provided by Cys-87, Cys-93, Cys-96, and Cys-162. Residues Gln-284, Tyr-313, Glu-334, and Asp-375 each contribute to the S-adenosyl-L-methionine site. The active-site Nucleophile is Cys-402.

Belongs to the class I-like SAM-binding methyltransferase superfamily. RNA M5U methyltransferase family.

This is an uncharacterized protein from Nanoarchaeum equitans (strain Kin4-M).